Reading from the N-terminus, the 212-residue chain is ATP synthase subunit 5, mitochondrial (212 aa).

The transit peptide at 1 to 17 directs the protein to the mitochondrion; that stretch reads MFNRVFTRSFASSLRAA.

The protein belongs to the ATPase delta chain family. In terms of assembly, F-type ATPases have 2 components, CF(1) - the catalytic core - and CF(0) - the membrane proton channel. CF(1) has five subunits: alpha(3), beta(3), gamma(1), delta(1), epsilon(1). CF(0) has three main subunits: a, b and c.

It localises to the mitochondrion. The protein localises to the mitochondrion inner membrane. Mitochondrial membrane ATP synthase (F(1)F(0) ATP synthase or Complex V) produces ATP from ADP in the presence of a proton gradient across the membrane which is generated by electron transport complexes of the respiratory chain. F-type ATPases consist of two structural domains, F(1) - containing the extramembraneous catalytic core and F(0) - containing the membrane proton channel, linked together by a central stalk and a peripheral stalk. During catalysis, ATP synthesis in the catalytic domain of F(1) is coupled via a rotary mechanism of the central stalk subunits to proton translocation. Part of the complex F(0) domain and the peripheric stalk, which acts as a stator to hold the catalytic alpha(3)beta(3) subcomplex and subunit a/ATP6 static relative to the rotary elements. The sequence is that of ATP synthase subunit 5, mitochondrial (ATP5) from Saccharomyces cerevisiae (strain ATCC 204508 / S288c) (Baker's yeast).